The following is a 367-amino-acid chain: Diphthine methyltransferase homolog (367 aa).

WD repeat units follow at residues 84–124 (NFNS…KKLE), 132–173 (SLSN…SKVT), 180–220 (AHDY…NHND), and 234–274 (RCDM…QPII).

This sequence belongs to the DPH7 family.

It catalyses the reaction diphthine methyl ester-[translation elongation factor 2] + H2O = diphthine-[translation elongation factor 2] + methanol + H(+). It participates in protein modification; peptidyl-diphthamide biosynthesis. Its function is as follows. Catalyzes the demethylation of diphthine methyl ester to form diphthine, an intermediate diphthamide biosynthesis, a post-translational modification of histidine which occurs in translation elongation factor 2 (efbA). The sequence is that of Diphthine methyltransferase homolog (wdr85) from Dictyostelium discoideum (Social amoeba).